The chain runs to 581 residues: 2-succinyl-5-enolpyruvyl-6-hydroxy-3-cyclohexene-1-carboxylate synthase (581 aa).

The protein belongs to the TPP enzyme family. MenD subfamily. In terms of assembly, homodimer. The cofactor is Mg(2+). Mn(2+) is required as a cofactor. Requires thiamine diphosphate as cofactor.

The catalysed reaction is isochorismate + 2-oxoglutarate + H(+) = 5-enolpyruvoyl-6-hydroxy-2-succinyl-cyclohex-3-ene-1-carboxylate + CO2. It functions in the pathway quinol/quinone metabolism; 1,4-dihydroxy-2-naphthoate biosynthesis; 1,4-dihydroxy-2-naphthoate from chorismate: step 2/7. The protein operates within quinol/quinone metabolism; menaquinone biosynthesis. Catalyzes the thiamine diphosphate-dependent decarboxylation of 2-oxoglutarate and the subsequent addition of the resulting succinic semialdehyde-thiamine pyrophosphate anion to isochorismate to yield 2-succinyl-5-enolpyruvyl-6-hydroxy-3-cyclohexene-1-carboxylate (SEPHCHC). This Chlorobium phaeobacteroides (strain BS1) protein is 2-succinyl-5-enolpyruvyl-6-hydroxy-3-cyclohexene-1-carboxylate synthase.